Here is a 113-residue protein sequence, read N- to C-terminus: UPF0060 membrane protein Arth_4423 (113 aa).

The next 4 membrane-spanning stretches (helical) occupy residues 7–27 (VLLF…VWQA), 33–53 (AWWW…VATL), 62–82 (ILAA…MVFD), and 91–111 (VIGS…PRGT).

The protein belongs to the UPF0060 family.

The protein resides in the cell membrane. This chain is UPF0060 membrane protein Arth_4423, found in Arthrobacter sp. (strain FB24).